We begin with the raw amino-acid sequence, 122 residues long: Urease subunit beta (122 aa).

This sequence belongs to the urease beta subunit family. In terms of assembly, heterotrimer of UreA (gamma), UreB (beta) and UreC (alpha) subunits. Three heterotrimers associate to form the active enzyme.

It is found in the cytoplasm. It catalyses the reaction urea + 2 H2O + H(+) = hydrogencarbonate + 2 NH4(+). Its pathway is nitrogen metabolism; urea degradation; CO(2) and NH(3) from urea (urease route): step 1/1. This is Urease subunit beta from Acetivibrio thermocellus (strain ATCC 27405 / DSM 1237 / JCM 9322 / NBRC 103400 / NCIMB 10682 / NRRL B-4536 / VPI 7372) (Clostridium thermocellum).